The chain runs to 387 residues: Protein FAM153B (387 aa).

Disordered stretches follow at residues 233–256 (SYNGEEEDPEEVKTSLGVPQRGDL) and 327–374 (TITG…KKSR). Positions 336–345 (SASPSSAPAE) are enriched in low complexity. Over residues 347-359 (ATEKTKVEEEVKT) the composition is skewed to basic and acidic residues. Basic residues predominate over residues 360–374 (RKPKKKTRKPSKKSR).

This sequence belongs to the FAM153 family.

The sequence is that of Protein FAM153B (FAM153B) from Homo sapiens (Human).